Consider the following 1703-residue polypeptide: Gingipain R1 (1703 aa).

Positions 1–20 (MNKFVSIALCSSLLGGMAFA) are cleaved as a signal peptide. A propeptide spanning residues 21–224 (QQTELGRNPN…RMFMNYEPGR (204 aa)) is cleaved from the precursor. Positions 302, 324, 327, 329, 331, 385, and 390 each coordinate Ca(2+). Residue His435 is the Proton donor of the active site. The Nucleophile role is filled by Cys468. Residues Phe473, Glu482, Asp516, Glu517, Glu520, and His526 each contribute to the Ca(2+) site. Residues 940 to 968 (WDAPNGTPNPNPNPNPNPNPGTTTLSESF) are disordered. Positions 946-958 (TPNPNPNPNPNPN) are enriched in pro residues.

It belongs to the peptidase C25 family.

Its subcellular location is the secreted. The catalysed reaction is Hydrolysis of proteins and small molecule substrates, with a preference for Arg in P1.. Its function is as follows. Thiol protease. Acts synergistically with RgpB to catalyze the maturation of fimbrial subunits, such as FimA. Its proteolytic activity is a major factor in both periodontal tissue destruction and in evasion of host defense mechanisms. In Porphyromonas gingivalis (strain ATCC 33277 / DSM 20709 / CIP 103683 / JCM 12257 / NCTC 11834 / 2561), this protein is Gingipain R1.